Reading from the N-terminus, the 507-residue chain is Histidine ammonia-lyase (507 aa).

A cross-link (5-imidazolinone (Ala-Gly)) is located at residues 141–143; it reads ASG. Serine 142 carries the 2,3-didehydroalanine (Ser) modification.

It belongs to the PAL/histidase family. Post-translationally, contains an active site 4-methylidene-imidazol-5-one (MIO), which is formed autocatalytically by cyclization and dehydration of residues Ala-Ser-Gly.

Its subcellular location is the cytoplasm. It catalyses the reaction L-histidine = trans-urocanate + NH4(+). It participates in amino-acid degradation; L-histidine degradation into L-glutamate; N-formimidoyl-L-glutamate from L-histidine: step 1/3. The sequence is that of Histidine ammonia-lyase from Burkholderia lata (strain ATCC 17760 / DSM 23089 / LMG 22485 / NCIMB 9086 / R18194 / 383).